The following is a 398-amino-acid chain: Nonsense-mediated decay protein 4 (398 aa).

Positions 327–355 (PVTSNYRGKNNRGRNNRGRRGNKRRERER) are disordered. Over residues 335 to 350 (KNNRGRNNRGRRGNKR) the composition is skewed to basic residues.

The protein localises to the cytoplasm. Functionally, involved in nonsense-mediated decay of mRNAs containing premature stop codons. This is Nonsense-mediated decay protein 4 (NMD4) from Candida albicans (strain SC5314 / ATCC MYA-2876) (Yeast).